Consider the following 357-residue polypeptide: Peptide chain release factor 1 (357 aa).

Q232 is subject to N5-methylglutamine.

This sequence belongs to the prokaryotic/mitochondrial release factor family. Methylated by PrmC. Methylation increases the termination efficiency of RF1.

The protein resides in the cytoplasm. Functionally, peptide chain release factor 1 directs the termination of translation in response to the peptide chain termination codons UAG and UAA. In Oleidesulfovibrio alaskensis (strain ATCC BAA-1058 / DSM 17464 / G20) (Desulfovibrio alaskensis), this protein is Peptide chain release factor 1.